The following is a 31-amino-acid chain: MISILTYFGILFGILTITVIIFVALNKIQLI.

Residues 4–24 traverse the membrane as a helical segment; sequence ILTYFGILFGILTITVIIFVA.

This sequence belongs to the PetL family. In terms of assembly, the 4 large subunits of the cytochrome b6-f complex are cytochrome b6, subunit IV (17 kDa polypeptide, PetD), cytochrome f and the Rieske protein, while the 4 small subunits are PetG, PetL, PetM and PetN. The complex functions as a dimer.

It localises to the plastid. The protein resides in the chloroplast thylakoid membrane. Component of the cytochrome b6-f complex, which mediates electron transfer between photosystem II (PSII) and photosystem I (PSI), cyclic electron flow around PSI, and state transitions. PetL is important for photoautotrophic growth as well as for electron transfer efficiency and stability of the cytochrome b6-f complex. This chain is Cytochrome b6-f complex subunit 6, found in Chaetosphaeridium globosum (Charophycean green alga).